The following is a 519-amino-acid chain: NADH-quinone oxidoreductase subunit C/D (519 aa).

The segment at 1–138 (MSERIEIPAE…TNEEPVDTTQ (138 aa)) is NADH dehydrogenase I subunit C. The segment at 159-519 (DEYIINIGPQ…VDYVVPDIDR (361 aa)) is NADH dehydrogenase I subunit D.

It in the N-terminal section; belongs to the complex I 30 kDa subunit family. The protein in the C-terminal section; belongs to the complex I 49 kDa subunit family. NDH-1 is composed of 13 different subunits. Subunits NuoB, CD, E, F, and G constitute the peripheral sector of the complex.

It localises to the cell inner membrane. It carries out the reaction a quinone + NADH + 5 H(+)(in) = a quinol + NAD(+) + 4 H(+)(out). NDH-1 shuttles electrons from NADH, via FMN and iron-sulfur (Fe-S) centers, to quinones in the respiratory chain. The immediate electron acceptor for the enzyme in this species is believed to be a menaquinone. Couples the redox reaction to proton translocation (for every two electrons transferred, four hydrogen ions are translocated across the cytoplasmic membrane), and thus conserves the redox energy in a proton gradient. The polypeptide is NADH-quinone oxidoreductase subunit C/D (Phocaeicola vulgatus (strain ATCC 8482 / DSM 1447 / JCM 5826 / CCUG 4940 / NBRC 14291 / NCTC 11154) (Bacteroides vulgatus)).